The following is a 282-amino-acid chain: Bifunctional protein FolD (282 aa).

NADP(+) is bound by residues 164–166 (GRS) and Ser-189.

The protein belongs to the tetrahydrofolate dehydrogenase/cyclohydrolase family. As to quaternary structure, homodimer.

It catalyses the reaction (6R)-5,10-methylene-5,6,7,8-tetrahydrofolate + NADP(+) = (6R)-5,10-methenyltetrahydrofolate + NADPH. The enzyme catalyses (6R)-5,10-methenyltetrahydrofolate + H2O = (6R)-10-formyltetrahydrofolate + H(+). It participates in one-carbon metabolism; tetrahydrofolate interconversion. Its function is as follows. Catalyzes the oxidation of 5,10-methylenetetrahydrofolate to 5,10-methenyltetrahydrofolate and then the hydrolysis of 5,10-methenyltetrahydrofolate to 10-formyltetrahydrofolate. The polypeptide is Bifunctional protein FolD (Lachnoclostridium phytofermentans (strain ATCC 700394 / DSM 18823 / ISDg) (Clostridium phytofermentans)).